Reading from the N-terminus, the 511-residue chain is uncharacterized protein (511 aa).

The segment at 59 to 79 is disordered; the sequence is VPVAANDDQPDGSRQSVRGRQ.

It belongs to the transposase 25 family.

This is an uncharacterized protein from Sinorhizobium fredii (strain NBRC 101917 / NGR234).